A 322-amino-acid polypeptide reads, in one-letter code: D-alanine--D-alanine ligase (322 aa).

One can recognise an ATP-grasp domain in the interval 108-311 (KEFYYNAELP…FPSLLDTLIE (204 aa)). 136-192 (IEDLGLPLVVKPACAGSSIGISLAHTEEELLAGINHARDCSAGAIMVEQFIKGRELT) provides a ligand contact to ATP. Mg(2+) contacts are provided by D265, E278, and N280.

The protein belongs to the D-alanine--D-alanine ligase family. Requires Mg(2+) as cofactor. Mn(2+) serves as cofactor.

It localises to the cytoplasm. The enzyme catalyses 2 D-alanine + ATP = D-alanyl-D-alanine + ADP + phosphate + H(+). It participates in cell wall biogenesis; peptidoglycan biosynthesis. Cell wall formation. In Desulfotalea psychrophila (strain LSv54 / DSM 12343), this protein is D-alanine--D-alanine ligase.